The sequence spans 60 residues: Potassium channel toxin alpha-KTx 12.5 (60 aa).

Positions 1-22 (MNKLPILIFMLLVCSMFISSDC) are cleaved as a signal peptide. Disulfide bonds link Cys30/Cys51, Cys36/Cys56, and Cys40/Cys58.

It belongs to the short scorpion toxin superfamily. Potassium channel inhibitor family. Alpha-KTx 12 subfamily. As to expression, expressed by the venom gland.

It localises to the secreted. Its function is as follows. This recombinant toxin inhibits the mammalian voltage-gated potassium channels Kv1.3/KCNA3 (IC(50)=28 nM). Kv1.1/KCNA1 and Kv1.2/KCNA2 potassium channels are also weakly inhibited (IC(50)=1.73 uM and IC(50)=12.63 uM, respectively). This is Potassium channel toxin alpha-KTx 12.5 from Lychas mucronatus (Chinese swimming scorpion).